Reading from the N-terminus, the 180-residue chain is NAD(P)H-quinone oxidoreductase subunit I, chloroplastic (180 aa).

4Fe-4S ferredoxin-type domains follow at residues 55-84 (GRIHFEFDKCIACEVCVRVCPIDLPVVDWK) and 95-124 (LNYSIDFGICIFCGNCVEYCPTNCLSMTEE). Cysteine 64, cysteine 67, cysteine 70, cysteine 74, cysteine 104, cysteine 107, cysteine 110, and cysteine 114 together coordinate [4Fe-4S] cluster.

Belongs to the complex I 23 kDa subunit family. In terms of assembly, NDH is composed of at least 16 different subunits, 5 of which are encoded in the nucleus. [4Fe-4S] cluster serves as cofactor.

Its subcellular location is the plastid. The protein localises to the chloroplast thylakoid membrane. The catalysed reaction is a plastoquinone + NADH + (n+1) H(+)(in) = a plastoquinol + NAD(+) + n H(+)(out). It carries out the reaction a plastoquinone + NADPH + (n+1) H(+)(in) = a plastoquinol + NADP(+) + n H(+)(out). Its function is as follows. NDH shuttles electrons from NAD(P)H:plastoquinone, via FMN and iron-sulfur (Fe-S) centers, to quinones in the photosynthetic chain and possibly in a chloroplast respiratory chain. The immediate electron acceptor for the enzyme in this species is believed to be plastoquinone. Couples the redox reaction to proton translocation, and thus conserves the redox energy in a proton gradient. The sequence is that of NAD(P)H-quinone oxidoreductase subunit I, chloroplastic from Ranunculus macranthus (Large buttercup).